Consider the following 62-residue polypeptide: Photosystem II reaction center protein Z (62 aa).

2 helical membrane-spanning segments follow: residues 8–28 (AVFA…VVLA) and 41–61 (FSGA…NSFI).

It belongs to the PsbZ family. PSII is composed of 1 copy each of membrane proteins PsbA, PsbB, PsbC, PsbD, PsbE, PsbF, PsbH, PsbI, PsbJ, PsbK, PsbL, PsbM, PsbT, PsbY, PsbZ, Psb30/Ycf12, at least 3 peripheral proteins of the oxygen-evolving complex and a large number of cofactors. It forms dimeric complexes.

It localises to the plastid. The protein localises to the chloroplast thylakoid membrane. May control the interaction of photosystem II (PSII) cores with the light-harvesting antenna, regulates electron flow through the 2 photosystem reaction centers. PSII is a light-driven water plastoquinone oxidoreductase, using light energy to abstract electrons from H(2)O, generating a proton gradient subsequently used for ATP formation. The sequence is that of Photosystem II reaction center protein Z from Anthoceros angustus (Hornwort).